The primary structure comprises 248 residues: Protein PIMREG (248 aa).

The span at 1–10 shows a compositional bias: polar residues; that stretch reads MASRWQNMGT. Residues 1–32 are disordered; the sequence is MASRWQNMGTSVRRRSLQHQEQLEDSKELQPV. Phosphoserine is present on residues Ser11 and Ser16. 2 consecutive short sequence motifs (D-box) follow at residues 14 to 17 and 53 to 56; these read RRSL and RLPL. The disordered stretch occupies residues 117 to 205; sequence KARRRKRGAQ…PSESDSDLEP (89 aa). Ser129 bears the Phosphoserine mark. Ser131 carries the post-translational modification Phosphoserine; by UHMK1; in vitro. Polar residues-rich tracts occupy residues 132 to 143 and 186 to 198; these read PTHSLSQKSTRL and PYSSTEPLCSPSE. A phosphoserine mark is found at Ser199 and Ser201.

In terms of assembly, isoform 1 and isoform 2 interact with PICALM; this interaction may target PICALM to the nucleus. During mitosis, associates with HDAC2 and MTA2 subunits of the chromatin-remodeling NuRD complex; this association is strongest at prometaphase and decreases as the cell progresses through metaphase and anaphase. In terms of processing, ubiquitinated by the anaphase-promoting complex/cyclosome (APC/C) complex in the presence of FZR1, leading to its degradation by the proteasome during mitotic exit. However, degradation is not essential for normal mitotic progression within a single cell cycle. In terms of tissue distribution, expressed in thymus (at protein level). Detected in spleen, colon, ovary and small intestines.

It localises to the nucleus. It is found in the nucleolus. In terms of biological role, during mitosis, may play a role in the control of metaphase-to-anaphase transition. In Homo sapiens (Human), this protein is Protein PIMREG.